Here is a 494-residue protein sequence, read N- to C-terminus: Truncated non-functional calcium-binding mitochondrial carrier SAL1-1 (494 aa).

One can recognise an EF-hand 1 domain in the interval 11-46 (QRDIRYACLFKELDVKGNGQVTLDNLISAFEKNDHP). Ca(2+) contacts are provided by lysine 65, aspartate 70, aspartate 93, aspartate 95, aspartate 97, lysine 99, and glutamate 104. EF-hand domains are found at residues 80–115 (NAES…LDNQ), 120–155 (NELN…RGQA), and 156–191 (SHKK…VPRK). Ca(2+) is bound by residues threonine 161 and serine 166. 2 Solcar repeats span residues 225-332 (IRGF…TKKI) and 345-434 (LSKF…LKKM). The next 5 helical transmembrane spans lie at 231 to 248 (FIAG…TAPF), 307 to 326 (GNGL…FGSF), 355 to 368 (GLAG…VYPI), 409 to 428 (RCHS…FGDF), and 458 to 475 (TSNG…CLSN). One copy of the Solcar 3; truncated repeat lies at 452–494 (SKQPGCTSNGCIQWNCRSFCCLSNQSFKNKTTSPRNICTSLCV).

Belongs to the mitochondrial carrier (TC 2.A.29) family.

The protein resides in the mitochondrion inner membrane. Calcium-dependent mitochondrial solute carrier. The chain is Truncated non-functional calcium-binding mitochondrial carrier SAL1-1 (SAL1) from Saccharomyces cerevisiae (strain ATCC 204508 / S288c) (Baker's yeast).